A 177-amino-acid chain; its full sequence is UPF0340 protein STH78 (177 aa).

Belongs to the UPF0340 family.

This chain is UPF0340 protein STH78, found in Symbiobacterium thermophilum (strain DSM 24528 / JCM 14929 / IAM 14863 / T).